Consider the following 515-residue polypeptide: Maturase K (515 aa).

Belongs to the intron maturase 2 family. MatK subfamily.

The protein resides in the plastid. The protein localises to the chloroplast. Usually encoded in the trnK tRNA gene intron. Probably assists in splicing its own and other chloroplast group II introns. This chain is Maturase K, found in Pinus yunnanensis (Yunnan pine).